A 271-amino-acid chain; its full sequence is MGHMVNAIAQIDEFVNLGANSIETDVSFDSSANPEYTYHGVPCDCRRWCKKWEYFNNFLKALRKATTPGDSKYHEKLVLVVFDLKTGSLYDNQASDAGKKLAKSLLQNYWNNGNNGGRAYIVLSIPNLAHYKLIAGFKEALTSEGHPELMDKVGYDFSGNDDIGDVANAYKEAGVTGHVWQSDGITNCLLRGLDRVRKAVANRDSSNGYVNKVYYWTVDKRQSTRDALDAGVDGIMTNYPDVIADVLNESAYKAKFRIASYDDNPWETFKN.

The active site involves histidine 3. The Mg(2+) site is built by glutamate 23 and aspartate 25. The Nucleophile role is filled by histidine 39. 2 disulfide bridges follow: cysteine 43/cysteine 49 and cysteine 45/cysteine 188. A Mg(2+)-binding site is contributed by aspartate 83. A glycan (N-linked (GlcNAc...) asparagine) is linked at asparagine 248.

The protein belongs to the arthropod phospholipase D family. Class II subfamily. Requires Mg(2+) as cofactor. Expressed by the venom gland.

Its subcellular location is the secreted. The catalysed reaction is an N-(acyl)-sphingosylphosphocholine = an N-(acyl)-sphingosyl-1,3-cyclic phosphate + choline. It carries out the reaction an N-(acyl)-sphingosylphosphoethanolamine = an N-(acyl)-sphingosyl-1,3-cyclic phosphate + ethanolamine. It catalyses the reaction a 1-acyl-sn-glycero-3-phosphocholine = a 1-acyl-sn-glycero-2,3-cyclic phosphate + choline. The enzyme catalyses a 1-acyl-sn-glycero-3-phosphoethanolamine = a 1-acyl-sn-glycero-2,3-cyclic phosphate + ethanolamine. Functionally, dermonecrotic toxins cleave the phosphodiester linkage between the phosphate and headgroup of certain phospholipids (sphingolipid and lysolipid substrates), forming an alcohol (often choline) and a cyclic phosphate. This toxin acts on sphingomyelin (SM). It may also act on ceramide phosphoethanolamine (CPE), lysophosphatidylcholine (LPC) and lysophosphatidylethanolamine (LPE), but not on lysophosphatidylserine (LPS), and lysophosphatidylglycerol (LPG). It acts by transphosphatidylation, releasing exclusively cyclic phosphate products as second products. Induces dermonecrosis, hemolysis, increased vascular permeability, edema, inflammatory response, and platelet aggregation. The polypeptide is Dermonecrotic toxin LarSicTox-alphaIB1c (Loxosceles arizonica (Arizona brown spider)).